A 74-amino-acid chain; its full sequence is Kappa-scoloptoxin(07)-Ssm2e (74 aa).

The signal sequence occupies residues 1–19 (MLVFYALLFVSVFSNTVMG). Residues 20-41 (ATIDMPIPKPILREAIEEIDVN) constitute a propeptide that is removed on maturation.

It belongs to the scoloptoxin-07 family. Contains 3 disulfide bonds. Expressed by the venom gland.

The protein localises to the secreted. In terms of biological role, inhibits voltage-gated potassium channels. This Scolopendra mutilans (Chinese red-headed centipede) protein is Kappa-scoloptoxin(07)-Ssm2e.